The chain runs to 417 residues: Histidinol-phosphate aminotransferase 1, chloroplastic (417 aa).

The N-terminal 40 residues, 1-40 (MGVINVQGSPSFSIHSSESNLRKSRALKKPFCSIRNRVYC), are a transit peptide targeting the chloroplast. Ala-41 is modified (N-acetylalanine). Lys-277 carries the post-translational modification N6-(pyridoxal phosphate)lysine.

This sequence belongs to the class-II pyridoxal-phosphate-dependent aminotransferase family. Histidinol-phosphate aminotransferase subfamily. As to quaternary structure, homodimer. Requires pyridoxal 5'-phosphate as cofactor. In terms of tissue distribution, expressed in both vegetative and reproductive tissues.

It localises to the plastid. It is found in the chloroplast. It carries out the reaction L-histidinol phosphate + 2-oxoglutarate = 3-(imidazol-4-yl)-2-oxopropyl phosphate + L-glutamate. The protein operates within amino-acid biosynthesis; L-histidine biosynthesis; L-histidine from 5-phospho-alpha-D-ribose 1-diphosphate: step 7/9. This is Histidinol-phosphate aminotransferase 1, chloroplastic (HISN6A) from Arabidopsis thaliana (Mouse-ear cress).